A 276-amino-acid polypeptide reads, in one-letter code: N-acetylmuramoyl-L-alanine amidase AmiD (276 aa).

The first 16 residues, 1-16, serve as a signal peptide directing secretion; it reads MRRFFWLVAAALLLAG. Residue Cys-17 is the site of N-palmitoyl cysteine attachment. Residue Cys-17 is the site of S-diacylglycerol cysteine attachment. The 138-residue stretch at 42–179 folds into the N-acetylmuramoyl-L-alanine amidase domain; the sequence is PRIKVLVIHY…APQRKDDPGP (138 aa). Residue His-50 coordinates Zn(2+). 51 to 52 is a binding site for substrate; it reads YT. Glu-119 (proton acceptor) is an active-site residue. Residues His-166 and Asp-176 each coordinate Zn(2+).

This sequence belongs to the N-acetylmuramoyl-L-alanine amidase 2 family. Requires Zn(2+) as cofactor.

The protein localises to the cell outer membrane. The enzyme catalyses Hydrolyzes the link between N-acetylmuramoyl residues and L-amino acid residues in certain cell-wall glycopeptides.. This is N-acetylmuramoyl-L-alanine amidase AmiD (amiD) from Escherichia coli (strain K12).